The following is a 385-amino-acid chain: Taurine hydroxylase-like protein SAT17 (385 aa).

It functions in the pathway mycotoxin biosynthesis. Functionally, taurine hydroxylase-like protein; part of the satratoxin SC3 cluster involved in the biosynthesis of satratoxins, trichothecene mycotoxins that are associated with human food poisonings. Satratoxins are suggested to be made by products of multiple gene clusters (SC1, SC2 and SC3) that encode 21 proteins in all, including polyketide synthases, acetyltransferases, and other enzymes expected to modify the trichothecene skeleton. SC1 encodes 10 proteins, SAT1 to SAT10. The largest are SAT8, which encodes a putative polyketide synthase (PKS) with a conventional non-reducing architecture, and SAT10, a putative protein containing four ankyrin repeats and thus may be involved in protein scaffolding. The putative short-chain reductase SAT3 may assist the PKS in some capacity. SAT6 contains a secretory lipase domain and acts probably as a trichothecene esterase. SAT5 encodes a putative acetyltransferase, and so, with SAT6, may affect endogenous protection from toxicity. The probable transcription factor SAT9 may regulate the expression of the SC1 cluster. SC2 encodes proteins SAT11 to SAT16, the largest of which encodes the putative reducing PKS SAT13. SAT11 is a cytochrome P450 monooxygenase, while SAT14 and SAT16 are probable acetyltransferases. The SC2 cluster may be regulated by the transcription factor SAT15. SC3 is a small cluster that encodes 5 proteins, SAT17 to SAT21. SAT21 is a putative MFS-type transporter which may have a role in exporting secondary metabolites. The four other proteins putatively encoded in SC3 include the taurine hydroxylase-like protein SAT17, the O-methyltransferase SAT18, the acetyltransferase SAT19, and the Cys6-type zinc finger SAT20, the latter being probably involved in regulation of SC3 expression. In Stachybotrys chartarum (strain CBS 109288 / IBT 7711) (Toxic black mold), this protein is Taurine hydroxylase-like protein SAT17.